Reading from the N-terminus, the 209-residue chain is Tektin bundle-interacting protein 1 (209 aa).

Microtubule inner protein component of sperm flagellar doublet microtubules.

It is found in the cytoplasm. It localises to the cytoskeleton. The protein resides in the cilium axoneme. Its subcellular location is the flagellum axoneme. Its function is as follows. Microtubule inner protein (MIP) part of the dynein-decorated doublet microtubules (DMTs) in cilia axoneme, which is required for motile cilia beating. Located at the center of the tektin bundle where may function to recruit tektins or stabilize the bundle. The sequence is that of Tektin bundle-interacting protein 1 from Homo sapiens (Human).